The following is a 196-amino-acid chain: Inosine triphosphate pyrophosphatase 2 (196 aa).

An ITP-binding site is contributed by 20–25 (TGNDGK). Mg(2+) is bound at residue Glu48. ITP is bound by residues Lys61, 77–78 (DT), Lys94, 153–156 (FGWD), Lys177, and 182–183 (PR).

This sequence belongs to the HAM1 NTPase family. Homodimer. It depends on Mg(2+) as a cofactor. Requires Mn(2+) as cofactor.

It localises to the cytoplasm. It carries out the reaction ITP + H2O = IMP + diphosphate + H(+). It catalyses the reaction dITP + H2O = dIMP + diphosphate + H(+). The catalysed reaction is XTP + H2O = XMP + diphosphate + H(+). Pyrophosphatase that hydrolyzes non-canonical purine nucleotides such as inosine triphosphate (ITP), deoxyinosine triphosphate (dITP) or xanthosine 5'-triphosphate (XTP) to their respective monophosphate derivatives. The enzyme does not distinguish between the deoxy- and ribose forms. Probably excludes non-canonical purines from RNA and DNA precursor pools, thus preventing their incorporation into RNA and DNA and avoiding chromosomal lesions. The protein is Inosine triphosphate pyrophosphatase 2 of Trypanosoma cruzi (strain CL Brener).